A 496-amino-acid polypeptide reads, in one-letter code: MLO-like protein 15 (496 aa).

Topologically, residues 1-9 are extracellular; it reads MAGGGTTLE. Residues 10-30 traverse the membrane as a helical segment; the sequence is YTPTWVVALVCSVIVSISFAV. The Cytoplasmic portion of the chain corresponds to 31 to 59; the sequence is ERLIHRAGKHFKNNDQKQLFGALQKIKEE. The helical transmembrane segment at 60-80 threads the bilayer; it reads LMLVGFISLLLSVGQSKIAKI. At 81–147 the chain is on the extracellular side; it reads CISKELSEKF…MSLSALHELH (67 aa). Residues 148 to 168 form a helical membrane-spanning segment; sequence IFIFVLAVAHIIFCLLTIVFG. Residues 169–269 lie on the Cytoplasmic side of the membrane; the sequence is TMKIKQWKKW…KYLMRALNSD (101 aa). Residues 270–290 traverse the membrane as a helical segment; sequence FKKVVGISWYLWVFVVLFLLL. A topological domain (extracellular) is located at residue Asn291. A helical transmembrane segment spans residues 292 to 312; the sequence is IVAWHVYFWLAFIPLILLLAV. Over 313–355 the chain is Cytoplasmic; it reads GTKLEHIITDLAHEVAEKHIAVEGDLVVRPSDDLFWFQSPRLV. Residues 356-376 form a helical membrane-spanning segment; it reads LFLIHFILFQNSFEIAYFFFI. Residues 377–397 are Extracellular-facing; the sequence is LFQFGWDSCIMDHVKFVIPRL. The helical transmembrane segment at 398-418 threads the bilayer; the sequence is VIGVIIQLLCSYSTLPLYALV. Over 419-496 the chain is Cytoplasmic; that stretch reads TQMGSSFKGA…KEKSEIAHHD (78 aa). Positions 432–453 are calmodulin-binding; it reads EQTQEHLVGWAKMAKRGVKKGA. The interval 454–496 is disordered; the sequence is TQVGTSHDATSPRPSIQLNSLLGKGSSQQNQNPKEKSEIAHHD. Residues 455 to 485 are compositionally biased toward polar residues; the sequence is QVGTSHDATSPRPSIQLNSLLGKGSSQQNQN. The span at 486-496 shows a compositional bias: basic and acidic residues; it reads PKEKSEIAHHD.

Belongs to the MLO family.

It is found in the membrane. May be involved in modulation of pathogen defense and leaf cell death. Activity seems to be regulated by Ca(2+)-dependent calmodulin binding and seems not to require heterotrimeric G proteins. This chain is MLO-like protein 15 (MLO15), found in Arabidopsis thaliana (Mouse-ear cress).